The primary structure comprises 246 residues: Aspartate/glutamate leucyltransferase (246 aa).

This sequence belongs to the R-transferase family. Bpt subfamily.

The protein localises to the cytoplasm. The enzyme catalyses N-terminal L-glutamyl-[protein] + L-leucyl-tRNA(Leu) = N-terminal L-leucyl-L-glutamyl-[protein] + tRNA(Leu) + H(+). It carries out the reaction N-terminal L-aspartyl-[protein] + L-leucyl-tRNA(Leu) = N-terminal L-leucyl-L-aspartyl-[protein] + tRNA(Leu) + H(+). Functionally, functions in the N-end rule pathway of protein degradation where it conjugates Leu from its aminoacyl-tRNA to the N-termini of proteins containing an N-terminal aspartate or glutamate. The polypeptide is Aspartate/glutamate leucyltransferase (Rhodospirillum rubrum (strain ATCC 11170 / ATH 1.1.1 / DSM 467 / LMG 4362 / NCIMB 8255 / S1)).